A 537-amino-acid polypeptide reads, in one-letter code: MIPGRIFLVLLVIFNTKPIHPNTLTEKYYESTCSVETAGYKSALRTGWHMTVMSIKLSQINIESCKSSNSLLAHELAIYSSAVDELRTLSSNALKSKRKKRFLGLILGLGAAVTAGVALAKTVQLESEIALIRDAVRNTNEAVVSLTNGMSVLAKVVDDLKNFISKELLPKINRVSCDVHDITAVIRFQQLNKRLLEVSREFSSNAGLTHTVSSFMLTDRELTSIVGGMAVSAGQKEIMLSSKAIMRRNGLAILSSVNADTLVYVIQLPLFGVMDTDCWVIRSSIDCHNIADKYACLARADNGWYCHNAGSLSYFPSPTDCEIHNGYAFCDTLKSLTVPVTSRECNSNMYTTNYDCKISTSKTYVSTAVLTTMGCLVSCYGHNSCTVINNDKGIIRTLPDGCHYISNKGVDRVQVGNTVYYLSKEVGKSIVVRGEPLVLKYDPLSFPDDKFDVAIRDVEHSINQTRTFFKASDQLLDLSENRENKNLNKSYILTTLLFVVMLIIIMAVIGFILYKVLKMIRDNKLKSKSTPGLTVLS.

Residues Met-1–Pro-21 form the signal peptide. Over Glu-26–Asn-486 the chain is Extracellular. Intrachain disulfides connect Cys-33–Cys-402, Cys-65–Cys-177, Cys-278–Cys-306, Cys-287–Cys-296, Cys-321–Cys-330, Cys-345–Cys-356, and Cys-379–Cys-385. The segment at Phe-102–Thr-122 is fusion peptide. The stretch at Ala-120–Arg-174 forms a coiled coil. Residues Leu-444–Ser-479 are a coiled coil. The N-linked (GlcNAc...) asparagine; by host glycan is linked to Asn-463. The helical transmembrane segment at Leu-487–Lys-515 threads the bilayer. The Cytoplasmic segment spans residues Val-516 to Ser-537.

It belongs to the paramyxoviruses fusion glycoprotein family. In terms of assembly, homotrimer. Heterodimer with fusion protein F2; disulfide-linked. Part of a complex composed of F1, F2 and G glycoproteins. As to quaternary structure, homotrimer. Heterodimer with fusion protein F1; disulfide-linked. Part of a complex composed of F1, F2 and G glycoproteins. Post-translationally, the F glycoprotein is synthesized as a F0 inactive precursor that is heavily N-glycosylated and processed by a host furin-like protease probably in the Golgi.

It is found in the host Golgi apparatus membrane. Its subcellular location is the virion membrane. It localises to the host cell membrane. Functionally, inactive precursor that is cleaved by a furin-like protease to give rise to the mature F1 and F2 fusion glycoproteins. Its function is as follows. Class I viral fusion protein. Under the current model, the protein has at least 3 conformational states: pre-fusion native state, pre-hairpin intermediate state, and post-fusion hairpin state. During viral and plasma cell membrane fusion, the coiled coil regions assume a trimer-of-hairpins structure, positioning the fusion peptide in close proximity to the C-terminal region of the ectodomain. The formation of this structure appears to drive apposition and subsequent fusion of viral and cellular membranes leading to delivery of the nucleocapsid into the cytoplasm. This fusion is pH independent and occurs at the plasma or endosomal membrane. The trimer of F1-F2 (F protein) also facilitates the attachment and entry into the host cell. Later in infection, F protein expressed at the plasma membrane of infected cells can mediate fusion with adjacent cells to form syncytia, a cytopathic effect that could lead to tissue necrosis. Major determinant of the species specificity of RSV infection. The trimer of F1-F2 (F protein) also facilitates the attachment and entry into the host cell. Later in infection, F protein expressed at the plasma membrane of infected cells can mediate fusion with adjacent cells to form syncytia, a cytopathic effect that could lead to tissue necrosis. The sequence is that of Fusion glycoprotein F0 (F) from Mus musculus (Mouse).